The sequence spans 294 residues: Type I ribosome-inactivating protein trichoanguina (294 aa).

The signal sequence occupies residues 1 to 19 (MALSFFFLAISLGSPTAIG). N70 carries an N-linked (GlcNAc...) asparagine glycan. Residues E177 and R180 contribute to the active site. N220 is a glycosylation site (N-linked (GlcNAc...) asparagine). Positions 265-294 (VGSEYDIPTTILHPGAMGMLHNQNGNYVTM) are excised as a propeptide.

It belongs to the ribosome-inactivating protein family. Type 1 RIP subfamily.

The enzyme catalyses Endohydrolysis of the N-glycosidic bond at one specific adenosine on the 28S rRNA.. In terms of biological role, inhibits protein synthesis by depurinating 28S rRNA in ribosomes. This chain is Type I ribosome-inactivating protein trichoanguina (TCA), found in Trichosanthes anguina (Snake gourd).